A 62-amino-acid chain; its full sequence is Photosystem II reaction center protein Z (62 aa).

Transmembrane regions (helical) follow at residues 8–28 and 41–61; these read LVLL…VVLA and YTGA…NSLV.

It belongs to the PsbZ family. In terms of assembly, PSII is composed of 1 copy each of membrane proteins PsbA, PsbB, PsbC, PsbD, PsbE, PsbF, PsbH, PsbI, PsbJ, PsbK, PsbL, PsbM, PsbT, PsbX, PsbY, PsbZ, Psb30/Ycf12, at least 3 peripheral proteins of the oxygen-evolving complex and a large number of cofactors. It forms dimeric complexes.

The protein resides in the plastid. It localises to the chloroplast thylakoid membrane. Its function is as follows. May control the interaction of photosystem II (PSII) cores with the light-harvesting antenna, regulates electron flow through the 2 photosystem reaction centers. PSII is a light-driven water plastoquinone oxidoreductase, using light energy to abstract electrons from H(2)O, generating a proton gradient subsequently used for ATP formation. In Porphyra purpurea (Red seaweed), this protein is Photosystem II reaction center protein Z.